The primary structure comprises 432 residues: Adenylosuccinate synthetase (432 aa).

GTP contacts are provided by residues 12–18 (GDEGKGK) and 40–42 (GHT). Aspartate 13 serves as the catalytic Proton acceptor. Residues aspartate 13 and glycine 40 each coordinate Mg(2+). IMP-binding positions include 13–16 (DEGK), 38–41 (NAGH), threonine 129, arginine 143, glutamine 224, threonine 239, and arginine 303. Catalysis depends on histidine 41, which acts as the Proton donor. 299–305 (VTTGRRR) provides a ligand contact to substrate. GTP is bound by residues arginine 305, 331-333 (KLD), and 413-415 (GVG).

It belongs to the adenylosuccinate synthetase family. As to quaternary structure, homodimer. Mg(2+) is required as a cofactor.

Its subcellular location is the cytoplasm. It catalyses the reaction IMP + L-aspartate + GTP = N(6)-(1,2-dicarboxyethyl)-AMP + GDP + phosphate + 2 H(+). The protein operates within purine metabolism; AMP biosynthesis via de novo pathway; AMP from IMP: step 1/2. Plays an important role in the de novo pathway of purine nucleotide biosynthesis. Catalyzes the first committed step in the biosynthesis of AMP from IMP. The polypeptide is Adenylosuccinate synthetase (Mycobacterium tuberculosis (strain CDC 1551 / Oshkosh)).